The chain runs to 200 residues: V-set and transmembrane domain-containing protein 5 (200 aa).

The N-terminal stretch at 1 to 28 (MRPLPSGRRKTRGISLGLFALCLAAARC) is a signal peptide. The Extracellular portion of the chain corresponds to 29–147 (LQSQGVSLYI…VSEILYEDLH (119 aa)). In terms of domain architecture, Ig-like C2-type spans 37-139 (YIPQATINAT…QFGTIVLHVS (103 aa)). Asn102 is a glycosylation site (N-linked (GlcNAc...) asparagine). Residues 148–168 (FVAVILAFLAAVAAVLISLMW) traverse the membrane as a helical segment. Residues 169-200 (VCNKCAYKFQRKRRHKLKESTTEEIELEDVEC) lie on the Cytoplasmic side of the membrane. An important for CDC42-dependent filopodia induction region spans residues 170–186 (CNKCAYKFQRKRRHKLK).

As to quaternary structure, can homooligomerize through cis interactions within the same cell membrane. N-glycosylated.

Its subcellular location is the cell membrane. The protein resides in the cell projection. The protein localises to the dendrite. It is found in the axon. Its function is as follows. Cell adhesion-like membrane protein of the central nervous system (CNS) which modulates both the position and complexity of central neurons by altering their membrane morphology and dynamics. Involved in the formation of neuronal dendrites and protrusions including dendritic filopodia. In synaptogenesis, regulates synapse formation by altering dendritic spine morphology and actin distribution. Promotes formation of unstable neuronal spines such as thin and branched types. Regulates neuronal morphogenesis and migration during cortical development in the brain. The sequence is that of V-set and transmembrane domain-containing protein 5 (VSTM5) from Homo sapiens (Human).